The following is a 404-amino-acid chain: Glucose-1-phosphate adenylyltransferase 2 (404 aa).

Alpha-D-glucose 1-phosphate contacts are provided by residues tyrosine 97, glycine 162, 177–178, and serine 195; that span reads EK.

Belongs to the bacterial/plant glucose-1-phosphate adenylyltransferase family. In terms of assembly, homotetramer.

It carries out the reaction alpha-D-glucose 1-phosphate + ATP + H(+) = ADP-alpha-D-glucose + diphosphate. The protein operates within glycan biosynthesis; glycogen biosynthesis. Functionally, involved in the biosynthesis of ADP-glucose, a building block required for the elongation reactions to produce glycogen. Catalyzes the reaction between ATP and alpha-D-glucose 1-phosphate (G1P) to produce pyrophosphate and ADP-Glc. The chain is Glucose-1-phosphate adenylyltransferase 2 from Vibrio vulnificus (strain YJ016).